Here is a 208-residue protein sequence, read N- to C-terminus: Ribosomal RNA large subunit methyltransferase E (208 aa).

S-adenosyl-L-methionine contacts are provided by Gly63, Trp65, Asp83, Asp99, and Asp124. Lys164 functions as the Proton acceptor in the catalytic mechanism.

It belongs to the class I-like SAM-binding methyltransferase superfamily. RNA methyltransferase RlmE family.

It localises to the cytoplasm. The catalysed reaction is uridine(2552) in 23S rRNA + S-adenosyl-L-methionine = 2'-O-methyluridine(2552) in 23S rRNA + S-adenosyl-L-homocysteine + H(+). Specifically methylates the uridine in position 2552 of 23S rRNA at the 2'-O position of the ribose in the fully assembled 50S ribosomal subunit. The polypeptide is Ribosomal RNA large subunit methyltransferase E (Salmonella choleraesuis (strain SC-B67)).